We begin with the raw amino-acid sequence, 308 residues long: Zinc transporter ZIP9 (308 aa).

The helical transmembrane segment at 4 to 24 threads the bilayer; it reads FLSISLLSVAMLVGCYVAGII. A glycan (N-linked (GlcNAc...) asparagine) is linked at Asn29. 5 consecutive transmembrane segments (helical) span residues 35-55, 107-127, 147-167, 177-197, and 211-231; these read LKLV…AVIV, AYIG…DQIG, ITTT…LGAA, LIVF…LVSF, and HLLV…LGLS. The N-linked (GlcNAc...) asparagine glycan is linked to Asn242. The next 2 helical transmembrane spans lie at 245-265 and 287-307; these read GVAM…HVLP and LEVA…IGHQ.

Belongs to the ZIP transporter (TC 2.A.5) family.

The protein resides in the golgi apparatus. The protein localises to the trans-Golgi network membrane. Its subcellular location is the cell membrane. It is found in the cytoplasm. It localises to the perinuclear region. The protein resides in the mitochondrion. The protein localises to the nucleus. The enzyme catalyses Zn(2+)(in) = Zn(2+)(out). Its function is as follows. Transports zinc ions across cell and organelle membranes into the cytoplasm and regulates intracellular zinc homeostasis. Participates in the zinc ions efflux out of the secretory compartments. Regulates intracellular zinc level, resulting in the enhancement of AKT1 and MAPK3/MAPK1 (Erk1/2) phosphorylation in response to the BCR activation. Also functions as a membrane androgen receptor that mediates, through a G protein, the non-classical androgen signaling pathway, characterized by the activation of MAPK3/MAPK1 (Erk1/2) and transcription factors CREB1 or ATF1. This pathway contributes to CLDN1 and CLDN5 expression and tight junction formation between adjacent Sertoli cells. Mediates androgen-induced vascular endothelial cell proliferation through activation of an inhibitory G protein leading to the AKT1 and MAPK3/MAPK1 (Erk1/2) activation which in turn modulate inhibition (phosphorylation) of GSK3B and CCND1 transcription. Moreover, has dual functions as a membrane-bound androgen receptor and as an androgen-dependent zinc transporter both of which are mediated through an inhibitory G protein (Gi) that mediates both MAP kinase and zinc signaling leading to the androgen-dependent apoptotic process. This is Zinc transporter ZIP9 from Mus musculus (Mouse).